Here is a 348-residue protein sequence, read N- to C-terminus: Erlin-1 (348 aa).

At 1 to 7 (MNMTQAR) the chain is on the cytoplasmic side. The helical transmembrane segment at 8 to 28 (LLVAAVVGLVAILLYASIHKI) threads the bilayer. Topologically, residues 29 to 348 (EEGHLAVYYR…SPIQNKENAG (320 aa)) are lumenal. N-linked (GlcNAc...) asparagine glycosylation is present at Asn-108. Lys-269 carries the N6-acetyllysine modification. Over residues 318 to 336 (DGRTGREDSLPPEEAREPS) the composition is skewed to basic and acidic residues. The interval 318-348 (DGRTGREDSLPPEEAREPSGESPIQNKENAG) is disordered. Residues 339 to 348 (SPIQNKENAG) are compositionally biased toward polar residues.

It belongs to the band 7/mec-2 family. Forms a heteromeric complex with ERLIN2. In complex with ERLIN2, interacts with RNF170. Interacts with AMFR and SYVN1. Deubiquitinated by USP25; leading to stabilization.

It localises to the endoplasmic reticulum membrane. Component of the ERLIN1/ERLIN2 complex which mediates the endoplasmic reticulum-associated degradation (ERAD) of inositol 1,4,5-trisphosphate receptors (IP3Rs). Involved in regulation of cellular cholesterol homeostasis by regulation the SREBP signaling pathway. Binds cholesterol and may promote ER retention of the SCAP-SREBF complex. The polypeptide is Erlin-1 (Mus musculus (Mouse)).